A 196-amino-acid chain; its full sequence is MSKVLVLKSSILGDFSQSGRLIDEWVAARRASGDTVTVRDLAAEPLPVLDGEIASGLRGGESLSPRQQEALALSDALIAELKVHDQLVVAAPMYNFSIPTQLKNWIDLVARAGVTFTYTAEGPQGLIQGKQAMLITTRGGVHKGSGSDHVVPYLKTVLGFIGITDVDTVYAEALSMGPEAAERGIKDARDQLALVG.

FMN contacts are provided by residues serine 10, 16–18, 93–96, and 137–140; these read SQS, MYNF, and TRGG.

The protein belongs to the azoreductase type 1 family. Homodimer. Requires FMN as cofactor.

It carries out the reaction 2 a quinone + NADH + H(+) = 2 a 1,4-benzosemiquinone + NAD(+). The enzyme catalyses N,N-dimethyl-1,4-phenylenediamine + anthranilate + 2 NAD(+) = 2-(4-dimethylaminophenyl)diazenylbenzoate + 2 NADH + 2 H(+). In terms of biological role, quinone reductase that provides resistance to thiol-specific stress caused by electrophilic quinones. Its function is as follows. Also exhibits azoreductase activity. Catalyzes the reductive cleavage of the azo bond in aromatic azo compounds to the corresponding amines. In Shewanella amazonensis (strain ATCC BAA-1098 / SB2B), this protein is FMN-dependent NADH:quinone oxidoreductase.